Reading from the N-terminus, the 142-residue chain is Large ribosomal subunit protein uL11 (142 aa).

It belongs to the universal ribosomal protein uL11 family. In terms of assembly, part of the ribosomal stalk of the 50S ribosomal subunit. Interacts with L10 and the large rRNA to form the base of the stalk. L10 forms an elongated spine to which L12 dimers bind in a sequential fashion forming a multimeric L10(L12)X complex. Post-translationally, one or more lysine residues are methylated.

Its function is as follows. Forms part of the ribosomal stalk which helps the ribosome interact with GTP-bound translation factors. The sequence is that of Large ribosomal subunit protein uL11 from Nocardioides sp. (strain ATCC BAA-499 / JS614).